We begin with the raw amino-acid sequence, 314 residues long: Nodulation protein D 1 (314 aa).

One can recognise an HTH lysR-type domain in the interval 6–63 (LDLNLLVALDAVMTARNLTAAARKINLSQPAMSAAIARLRTYFRDELFTMRGRELVPT). The H-T-H motif DNA-binding region spans 23-42 (LTAAARKINLSQPAMSAAIA).

Belongs to the LysR transcriptional regulatory family.

Its function is as follows. NodD regulates the expression of the nodABCFE genes which encode other nodulation proteins. NodD is also a negative regulator of its own expression. Binds flavonoids as inducers. The polypeptide is Nodulation protein D 1 (nodD1) (Bradyrhizobium diazoefficiens (strain JCM 10833 / BCRC 13528 / IAM 13628 / NBRC 14792 / USDA 110)).